Consider the following 516-residue polypeptide: Coiled-coil domain-containing protein 82 (516 aa).

Residues M1–S13 are compositionally biased toward basic residues. Positions M1 to D265 are disordered. Positions D38–D62 are enriched in acidic residues. The span at I78–N96 shows a compositional bias: basic and acidic residues. The span at K98–S107 shows a compositional bias: polar residues. The span at M113–H135 shows a compositional bias: basic and acidic residues. A phosphoserine mark is found at S170 and S194. T202 bears the Phosphothreonine mark. The stretch at E204–N232 forms a coiled coil. Residues H215 to R226 are compositionally biased toward basic and acidic residues. Residues T248–D265 are compositionally biased toward acidic residues. A Phosphoserine modification is found at S301.

The sequence is that of Coiled-coil domain-containing protein 82 (Ccdc82) from Rattus norvegicus (Rat).